Here is a 70-residue protein sequence, read N- to C-terminus: Waprin-Thr1 (70 aa).

An N-terminal signal peptide occupies residues 1-19; that stretch reads MKARLLLLSVVILVGMVSA. Residues 20-70 form the WAP domain; that stretch reads ENEKAGSCPDVNQPIPPLGLCRNMCESDSGCPNNEKCCKNGCGFMTCSRPR. 4 cysteine pairs are disulfide-bonded: Cys27/Cys57, Cys40/Cys61, Cys44/Cys56, and Cys50/Cys66.

This sequence belongs to the venom waprin family. In terms of tissue distribution, expressed by the venom gland.

It localises to the secreted. Damages membranes of susceptible bacteria. Has no hemolytic activity. Not toxic to mice. Does not inhibit the proteinases elastase and cathepsin G. This Thrasops jacksonii (Jackson's black tree snake) protein is Waprin-Thr1.